The chain runs to 254 residues: Keratin-associated protein 24-1 (254 aa).

6 consecutive repeat copies span residues 193–202 (YISNSCQPQS), 203–212 (YLVRNYHYSS), 213–222 (YRPTSCRPLS), 223–232 (YLSRSFRSLS), 233–242 (YIPSTFPPLR), and 243–252 (YLCSGSRPLK). The tract at residues 193-252 (YISNSCQPQSYLVRNYHYSSYRPTSCRPLSYLSRSFRSLSYIPSTFPPLRYLCSGSRPLK) is 6 X 10 AA repeats of Y-[ILR]-[SVPC]-[NRTS]-[SNTG]-X-[QHRP]-[PSY]-[QSL]-[SRK].

Belongs to the PMG family. Interacts with hair keratins. In terms of tissue distribution, specific expression in the middle/upper hair cuticle.

In terms of biological role, in the hair cortex, hair keratin intermediate filaments are embedded in an interfilamentous matrix, consisting of hair keratin-associated proteins (KRTAP), which are essential for the formation of a rigid and resistant hair shaft through their extensive disulfide bond cross-linking with abundant cysteine residues of hair keratins. The matrix proteins include the high-sulfur and high-glycine-tyrosine keratins. The sequence is that of Keratin-associated protein 24-1 (KRTAP24-1) from Homo sapiens (Human).